The primary structure comprises 437 residues: Alpha-galactosidase 3 (437 aa).

The signal sequence occupies residues 1–30; the sequence is MVIMKKMKDSVLFLVVGLFSLSVLVSQSIA. Cystine bridges form between cysteine 85–cysteine 117 and cysteine 165–cysteine 195. A glycan (N-linked (GlcNAc...) asparagine) is linked at asparagine 88. Residues 115-116 and lysine 191 each bind substrate; that span reads DD. Aspartate 193 (nucleophile) is an active-site residue. N-linked (GlcNAc...) asparagine glycosylation occurs at asparagine 214. Substrate is bound by residues 226-230, arginine 244, and aspartate 248; that span reads EWGVD. Aspartate 248 (proton donor) is an active-site residue. Asparagine 250, asparagine 315, and asparagine 408 each carry an N-linked (GlcNAc...) asparagine glycan.

This sequence belongs to the glycosyl hydrolase 27 family. As to quaternary structure, homodimer.

It is found in the secreted. Its subcellular location is the cell wall. It localises to the extracellular space. The protein resides in the apoplast. The protein localises to the vacuole. It carries out the reaction Hydrolysis of terminal, non-reducing alpha-D-galactose residues in alpha-D-galactosides, including galactose oligosaccharides, galactomannans and galactolipids.. Its function is as follows. May regulate leaf (and possibly other organ) development by functioning in cell wall loosening and cell wall expansion. The polypeptide is Alpha-galactosidase 3 (Arabidopsis thaliana (Mouse-ear cress)).